Here is a 536-residue protein sequence, read N- to C-terminus: Indolin-2-one monooxygenase (536 aa).

Residues 18 to 34 (GTATHALLLGVLIFLVI) form a helical membrane-spanning segment. Cys480 is a binding site for heme.

The protein belongs to the cytochrome P450 family. The cofactor is heme.

The protein localises to the membrane. It carries out the reaction indolin-2-one + reduced [NADPH--hemoprotein reductase] + O2 = 3-hydroxyindolin-2-one + oxidized [NADPH--hemoprotein reductase] + H2O + H(+). It functions in the pathway secondary metabolite biosynthesis; 2,4-dihydroxy-1,4-benzoxazin-3-one biosynthesis; 2,4-dihydroxy-1,4-benzoxazin-3-one from indoleglycerol phosphate: step 3/5. Its function is as follows. Catalyzes the conversion of indolin-2-one to 3-hydroxyindolin-2-one. This chain is Indolin-2-one monooxygenase (CYP71C2), found in Zea mays (Maize).